The sequence spans 172 residues: Transcriptional regulator CdrL (172 aa).

Residues S72–E113 are disordered. The segment at C116–G160 adopts a DZANK-type zinc-finger fold.

Belongs to the CdrL family.

It is found in the cytoplasm. Functionally, transcriptional regulator involved in the control of cell division. This chain is Transcriptional regulator CdrL, found in Halobacterium salinarum (strain ATCC 29341 / DSM 671 / R1).